Here is a 265-residue protein sequence, read N- to C-terminus: Polyglutamine-binding protein 1 (265 aa).

Residues 46–80 enclose the WW domain; sequence EGLPPSWYKVFDPSCGLPYYWNADTDLVSWLSPHD. Ser-94 carries the phosphoserine modification. The disordered stretch occupies residues 94–265; it reads SSNADAEEKL…AEASRTKQQD (172 aa). Basic and acidic residues predominate over residues 99–175; sequence AEEKLDRSHD…DKADREEGKE (77 aa). 15 repeat units span residues 104-110, 111-117, 118-124, 125-131, 132-138, 139-140, 141-142, 143-144, 150-151, 152-153, 154-155, 156-157, 158-159, 160-161, and 162-163. The interval 104-138 is 5 X 7 AA approximate tandem repeats of D-R-[SG]-H-D-K-S; it reads DRSHDKSDRGHDKSDRSHEKLDRGHDKSDRGHDKS. The interval 139-144 is 3 X 2 AA tandem repeats of [DE]-R; that stretch reads DRDRER. The 7 X 2 AA tandem repeats of [DE]-R stretch occupies residues 150-163; sequence DRERERDRERDRDR. The important for interaction with TXNL4A stretch occupies residues 245 to 255; that stretch reads YPSPGAVLRAN. Residue Ser-247 is modified to Phosphoserine.

Interacts with POU3F2/Brn-2, ATXN1, TXNL4A, HTT and AR. Interaction with ATXN1 correlates positively with the length of the polyglutamine tract. Interacts with RNA polymerase II large subunit in a phosphorylation-dependent manner. Forms a ternary complex with ATXN1 mutant and phosphorylated RNA polymerase II. Interacts (via C-terminus) with TXNL4A and CD2BP2. Interacts (via WW domain) with ATN1 and SF3B1, and may interact with additional splice factors. Interacts (via WW domain) with WBP11; Leading to reduce interaction between PQBP1 and TXNL4A. Interacts with CAPRIN1. Interacts with DDX1. Interacts with SFPQ. Interacts with KHSRP.

The protein resides in the nucleus. Its subcellular location is the nucleus speckle. The protein localises to the cytoplasmic granule. Its function is as follows. Intrinsically disordered protein that acts as a scaffold, and which is involved in different processes, such as pre-mRNA splicing, transcription regulation, innate immunity and neuron development. Interacts with splicing-related factors via the intrinsically disordered region and regulates alternative splicing of target pre-mRNA species. May suppress the ability of POU3F2 to transactivate the DRD1 gene in a POU3F2 dependent manner. Can activate transcription directly or via association with the transcription machinery. May be involved in ATXN1 mutant-induced cell death. The interaction with ATXN1 mutant reduces levels of phosphorylated RNA polymerase II large subunit. Involved in the assembly of cytoplasmic stress granule, possibly by participating in the transport of neuronal RNA granules. Also acts as an innate immune sensor of infection by retroviruses, by detecting the presence of reverse-transcribed DNA in the cytosol. Directly binds retroviral reverse-transcribed DNA in the cytosol and interacts with CGAS, leading to activate the cGAS-STING signaling pathway, triggering type-I interferon production. This Gorilla gorilla gorilla (Western lowland gorilla) protein is Polyglutamine-binding protein 1 (PQBP1).